The sequence spans 183 residues: MGSSLSIFASIWNRFFNNAEYKVIIVGLNAAGKTTTLYKLLLDEVVSTTPTVGSNLEEFVYRNIRLLMWDLGGQDLLRSTWNQYYINTQAVILVIDSTDRARVNLIKEELFKMLAHENLKKSIILIYANKQDLKDAMSPTELSTLLSLHSIKDHDYHIQACCALTGQGLESGLDWLVSHINKS.

GTP-binding positions include G27–T34, D70–Q74, and N129–D132.

Belongs to the small GTPase superfamily. Arf family.

Functionally, may bind and exchange GTP and GDP. This chain is ADP-ribosylation factor-like protein 5 (arl5), found in Dictyostelium discoideum (Social amoeba).